The following is a 392-amino-acid chain: LL-diaminopimelate aminotransferase (392 aa).

Substrate is bound by residues Y13 and G38. Pyridoxal 5'-phosphate contacts are provided by residues Y67, S102–K103, Y127, N177, Y208, and S236–S238. Substrate-binding residues include K103, Y127, and N177. K239 is modified (N6-(pyridoxal phosphate)lysine). R247 is a pyridoxal 5'-phosphate binding site. R366 serves as a coordination point for substrate.

It belongs to the class-I pyridoxal-phosphate-dependent aminotransferase family. LL-diaminopimelate aminotransferase subfamily. As to quaternary structure, homodimer. Pyridoxal 5'-phosphate serves as cofactor.

The enzyme catalyses (2S,6S)-2,6-diaminopimelate + 2-oxoglutarate = (S)-2,3,4,5-tetrahydrodipicolinate + L-glutamate + H2O + H(+). The protein operates within amino-acid biosynthesis; L-lysine biosynthesis via DAP pathway; LL-2,6-diaminopimelate from (S)-tetrahydrodipicolinate (aminotransferase route): step 1/1. Involved in the synthesis of meso-diaminopimelate (m-DAP or DL-DAP), required for both lysine and peptidoglycan biosynthesis. Catalyzes the direct conversion of tetrahydrodipicolinate to LL-diaminopimelate. Can also use m-DAP instead of LL-DAP as the amino-group donor. The chain is LL-diaminopimelate aminotransferase from Gloeobacter violaceus (strain ATCC 29082 / PCC 7421).